The following is an 82-amino-acid chain: Small ribosomal subunit protein bS16 (82 aa).

The protein belongs to the bacterial ribosomal protein bS16 family.

The polypeptide is Small ribosomal subunit protein bS16 (Shewanella sp. (strain ANA-3)).